Consider the following 669-residue polypeptide: DNA ligase (669 aa).

NAD(+) is bound by residues 34–38, 83–84, and Glu-114; these read DAEYD and SL. Catalysis depends on Lys-116, which acts as the N6-AMP-lysine intermediate. 4 residues coordinate NAD(+): Arg-137, Glu-171, Lys-287, and Lys-311. Zn(2+) is bound by residues Cys-405, Cys-408, Cys-423, and Cys-428. In terms of domain architecture, BRCT spans 591 to 669; sequence NVESYFAGKT…EERFLQELNK (79 aa).

The protein belongs to the NAD-dependent DNA ligase family. LigA subfamily. Mg(2+) serves as cofactor. Requires Mn(2+) as cofactor.

It carries out the reaction NAD(+) + (deoxyribonucleotide)n-3'-hydroxyl + 5'-phospho-(deoxyribonucleotide)m = (deoxyribonucleotide)n+m + AMP + beta-nicotinamide D-nucleotide.. Functionally, DNA ligase that catalyzes the formation of phosphodiester linkages between 5'-phosphoryl and 3'-hydroxyl groups in double-stranded DNA using NAD as a coenzyme and as the energy source for the reaction. It is essential for DNA replication and repair of damaged DNA. This chain is DNA ligase, found in Bacillus anthracis (strain A0248).